A 228-amino-acid polypeptide reads, in one-letter code: Probable septum site-determining protein MinC (228 aa).

The protein belongs to the MinC family. In terms of assembly, interacts with MinD and FtsZ.

Cell division inhibitor that blocks the formation of polar Z ring septums. Rapidly oscillates between the poles of the cell to destabilize FtsZ filaments that have formed before they mature into polar Z rings. Prevents FtsZ polymerization. The polypeptide is Probable septum site-determining protein MinC (Pectobacterium carotovorum subsp. carotovorum (strain PC1)).